Here is a 268-residue protein sequence, read N- to C-terminus: MNRKEISKVVDLVRESNPLVHNITNVVVTNFTANGLLALGASPVMAYAKEEVAEMASIAGALVLNMGTLRPEEVEAMLLAGKSANVNNVPVLFDPVGAGATSYRTEVARHIPAEIELAIIRGNAAEIANVINERWEIKGVDAGAGNGNVVSIAKQAADELNTVAVITGKEDVVTDGQRTIVIRNGHPILTKVTGTGCLLTSVIGAFVAVEKDYVKAAVAALTFYGVAAELAAAKTVEKGPGSFQIEFLNQLANTTSGDIEKYGEIEVI.

Substrate is bound at residue methionine 45. ATP-binding residues include arginine 121 and threonine 167. Glycine 194 serves as a coordination point for substrate.

It belongs to the Thz kinase family. Requires Mg(2+) as cofactor.

The enzyme catalyses 5-(2-hydroxyethyl)-4-methylthiazole + ATP = 4-methyl-5-(2-phosphooxyethyl)-thiazole + ADP + H(+). It participates in cofactor biosynthesis; thiamine diphosphate biosynthesis; 4-methyl-5-(2-phosphoethyl)-thiazole from 5-(2-hydroxyethyl)-4-methylthiazole: step 1/1. Functionally, catalyzes the phosphorylation of the hydroxyl group of 4-methyl-5-beta-hydroxyethylthiazole (THZ). The sequence is that of Hydroxyethylthiazole kinase from Bacillus cereus (strain Q1).